The following is a 170-amino-acid chain: MEGERPRSDTVTTTVSSHMETISLGGSIAYDRSFLRSPTGVLLLMEIMFGLLVWALIAGSEYFLFSAFGWVMFVAVFYWVLSVFFFLLHLTRANTRITKVPWSLVGLCFNGSAFVLYLIAAVVEASSVNKDVHQHHNYNSWTASSFFAFIVTVCYALSTYFSFQAWRTKS.

At 1–38 (MEGERPRSDTVTTTVSSHMETISLGGSIAYDRSFLRSP) the chain is on the cytoplasmic side. Residues 34–167 (FLRSPTGVLL…STYFSFQAWR (134 aa)) enclose the MARVEL domain. A helical membrane pass occupies residues 39-59 (TGVLLLMEIMFGLLVWALIAG). Over 60-67 (SEYFLFSA) the chain is Extracellular. A helical membrane pass occupies residues 68-88 (FGWVMFVAVFYWVLSVFFFLL). The Cytoplasmic portion of the chain corresponds to 89 to 102 (HLTRANTRITKVPW). Residues 103-123 (SLVGLCFNGSAFVLYLIAAVV) form a helical membrane-spanning segment. At 124-145 (EASSVNKDVHQHHNYNSWTASS) the chain is on the extracellular side. The chain crosses the membrane as a helical span at residues 146–166 (FFAFIVTVCYALSTYFSFQAW). Residues 167–170 (RTKS) are Cytoplasmic-facing.

The protein localises to the membrane. It is found in the nucleus. This Xenopus laevis (African clawed frog) protein is MARVEL domain-containing protein 1 (marveld1).